The primary structure comprises 426 residues: Serine--tRNA ligase (426 aa).

Residues 1-15 are compositionally biased toward basic and acidic residues; that stretch reads MIDVKDLSENPDKFR. Residues 1–20 form a disordered region; that stretch reads MIDVKDLSENPDKFRASQRA. 228–230 lines the L-serine pocket; that stretch reads TSE. Residues 259–261 and Val-275 each bind ATP; that span reads RRE. Glu-282 serves as a coordination point for L-serine. ATP is bound at residue 346–349; sequence ELTS. Thr-386 is a binding site for L-serine.

The protein belongs to the class-II aminoacyl-tRNA synthetase family. Type-1 seryl-tRNA synthetase subfamily. In terms of assembly, homodimer. The tRNA molecule binds across the dimer.

The protein localises to the cytoplasm. It catalyses the reaction tRNA(Ser) + L-serine + ATP = L-seryl-tRNA(Ser) + AMP + diphosphate + H(+). It carries out the reaction tRNA(Sec) + L-serine + ATP = L-seryl-tRNA(Sec) + AMP + diphosphate + H(+). It functions in the pathway aminoacyl-tRNA biosynthesis; selenocysteinyl-tRNA(Sec) biosynthesis; L-seryl-tRNA(Sec) from L-serine and tRNA(Sec): step 1/1. Catalyzes the attachment of serine to tRNA(Ser). Is also able to aminoacylate tRNA(Sec) with serine, to form the misacylated tRNA L-seryl-tRNA(Sec), which will be further converted into selenocysteinyl-tRNA(Sec). This Paenarthrobacter aurescens (strain TC1) protein is Serine--tRNA ligase.